A 114-amino-acid polypeptide reads, in one-letter code: uncharacterized protein (114 aa).

The 109-residue stretch at 6–114 (IFSKIIRREI…GGRPFSWPPG (109 aa)) folds into the HIT domain. Residues 98–102 (HLHLH) carry the Histidine triad motif motif.

This is an uncharacterized protein from Synechocystis sp. (strain ATCC 27184 / PCC 6803 / Kazusa).